A 381-amino-acid chain; its full sequence is O-phospho-L-seryl-tRNA:Cys-tRNA synthase (381 aa).

Residues 86 to 87, Asn192, and 215 to 217 contribute to the pyridoxal 5'-phosphate site; these read AR and SGH. Position 218 is an N6-(pyridoxal phosphate)lysine (Lys218).

Belongs to the SepCysS family. In terms of assembly, homodimer. Interacts with SepRS. Pyridoxal 5'-phosphate is required as a cofactor.

The catalysed reaction is O-phospho-L-seryl-tRNA(Cys) + hydrogen sulfide + H(+) = L-cysteinyl-tRNA(Cys) + phosphate. Its function is as follows. Converts O-phospho-L-seryl-tRNA(Cys) (Sep-tRNA(Cys)) to L-cysteinyl-tRNA(Cys) (Cys-tRNA(Cys)). This chain is O-phospho-L-seryl-tRNA:Cys-tRNA synthase, found in Methanococcus vannielii (strain ATCC 35089 / DSM 1224 / JCM 13029 / OCM 148 / SB).